The chain runs to 101 residues: Small ribosomal subunit protein uS14 (101 aa).

Belongs to the universal ribosomal protein uS14 family. As to quaternary structure, part of the 30S ribosomal subunit. Contacts proteins S3 and S10.

Functionally, binds 16S rRNA, required for the assembly of 30S particles and may also be responsible for determining the conformation of the 16S rRNA at the A site. The sequence is that of Small ribosomal subunit protein uS14 from Albidiferax ferrireducens (strain ATCC BAA-621 / DSM 15236 / T118) (Rhodoferax ferrireducens).